The primary structure comprises 221 residues: Putative adhesin P1-like protein MPN_131 (221 aa).

Positions 13-36 are enriched in low complexity; sequence RYGNNHRGSNSSTSGVTTQGQSQN. Disordered regions lie at residues 13-51 and 90-183; these read RYGN…NVGV and GWRN…TPSG. The segment covering 37–48 has biased composition (polar residues); the sequence is ASSNEPAPTFSN. The segment covering 130 to 139 has biased composition (basic and acidic residues); the sequence is LKQDKADKSG. Polar residues-rich tracts occupy residues 149 to 160 and 174 to 183; these read SGDNLTNYTNLP and HSPTRTTPSG.

This sequence belongs to the adhesin P1 family.

This Mycoplasma pneumoniae (strain ATCC 29342 / M129 / Subtype 1) (Mycoplasmoides pneumoniae) protein is Putative adhesin P1-like protein MPN_131.